The chain runs to 252 residues: MERLLIVNADDFGLSKGQNYGIIEACRNGIVTSTTALVNGQAIDHAVQLSRDEPSLAIGMHFVLTMGKPLTAMPGLTRDGVLGKWIWQLAEEDALPLEEITQELASQYLRFIELFGRKPTHLDSHHHVHMFPQIFPIVARFAAEEGIALRIDRQPLSNSGDLPANLRSSQGFSSAFYGEEISEALFLQVLDDASHRGDLSLEVMCHPAFIDNTIRQSAYCFPRLTELEVLTSASLKYAIAERGYRLGSYLNV.

Residues His61 and His125 each contribute to the Mg(2+) site.

The protein belongs to the YdjC deacetylase family. ChbG subfamily. As to quaternary structure, homodimer. Mg(2+) serves as cofactor.

Its subcellular location is the cytoplasm. The enzyme catalyses N,N'-diacetylchitobiose + H2O = N-acetyl-beta-D-glucosaminyl-(1-&gt;4)-D-glucosamine + acetate. It carries out the reaction diacetylchitobiose-6'-phosphate + H2O = N'-monoacetylchitobiose-6'-phosphate + acetate. It participates in glycan degradation; chitin degradation. Functionally, involved in the degradation of chitin. ChbG is essential for growth on the acetylated chitooligosaccharides chitobiose and chitotriose but is dispensable for growth on cellobiose and chitosan dimer, the deacetylated form of chitobiose. Deacetylation of chitobiose-6-P and chitotriose-6-P is necessary for both the activation of the chb promoter by the regulatory protein ChbR and the hydrolysis of phosphorylated beta-glucosides by the phospho-beta-glucosidase ChbF. Catalyzes the removal of only one acetyl group from chitobiose-6-P to yield monoacetylchitobiose-6-P, the inducer of ChbR and the substrate of ChbF. This Escherichia coli (strain 55989 / EAEC) protein is Chitooligosaccharide deacetylase.